The following is a 328-amino-acid chain: L-serine dehydratase/L-threonine deaminase (328 aa).

Lysine 41 is modified (N6-(pyridoxal phosphate)lysine). Position 128 (proline 128) interacts with pyridoxal 5'-phosphate.

It belongs to the serine/threonine dehydratase family. In terms of assembly, homodimer. Requires pyridoxal 5'-phosphate as cofactor. Predominantly expressed in the perivenous regions of the liver.

The protein localises to the cytoplasm. The catalysed reaction is L-serine = pyruvate + NH4(+). It catalyses the reaction L-threonine = 2-oxobutanoate + NH4(+). The protein operates within carbohydrate biosynthesis; gluconeogenesis. In terms of biological role, catalyzes the pyridoxal-phosphate-dependent dehydrative deamination of L-threonine and L-serine to ammonia and alpha-ketobutyrate and pyruvate, respectively. This chain is L-serine dehydratase/L-threonine deaminase (SDS), found in Homo sapiens (Human).